The primary structure comprises 190 residues: Shikimate kinase (190 aa).

15 to 20 (GSGKST) contacts ATP. Ser-19 lines the Mg(2+) pocket. Residues Asp-37, Arg-61, and Gly-83 each coordinate substrate. Position 121 (Arg-121) interacts with ATP. Position 148 (Arg-148) interacts with substrate.

This sequence belongs to the shikimate kinase family. Monomer. Mg(2+) is required as a cofactor.

It localises to the cytoplasm. The enzyme catalyses shikimate + ATP = 3-phosphoshikimate + ADP + H(+). Its pathway is metabolic intermediate biosynthesis; chorismate biosynthesis; chorismate from D-erythrose 4-phosphate and phosphoenolpyruvate: step 5/7. Its function is as follows. Catalyzes the specific phosphorylation of the 3-hydroxyl group of shikimic acid using ATP as a cosubstrate. The protein is Shikimate kinase of Chlorobium chlorochromatii (strain CaD3).